We begin with the raw amino-acid sequence, 523 residues long: Synaptotagmin-10 (523 aa).

Residues 1 to 55 (MSFRKEDGVSSLCQKALHIITELCFAGQVEWDKCSGIFPADRSGQGGGGTDISVS) are Vesicular-facing. A cysteine motif region spans residues 13–35 (CQKALHIITELCFAGQVEWDKCS). Residues 56–76 (LLAVVVSFCGLALLVVSLFVF) traverse the membrane as a helical segment. The Cytoplasmic portion of the chain corresponds to 77–523 (WKLCWPCWKS…CSSPRPPSTP (447 aa)). Thr-136 bears the Phosphothreonine mark. C2 domains lie at 231–352 (TCGK…TVWK) and 363–496 (DLGE…THWH). Ca(2+)-binding residues include Asp-262, Asp-268, Asp-320, Phe-321, Asp-322, Ser-325, Asp-328, Asp-394, Asp-400, Asp-454, and Asp-456.

This sequence belongs to the synaptotagmin family. In terms of assembly, homodimer; disulfide-linked via the cysteine motif. Can also form heterodimers with SYT3, SYT6, SYT7 and SYT9. Ca(2+) serves as cofactor.

The protein localises to the cytoplasmic vesicle. It is found in the secretory vesicle membrane. Functionally, ca(2+) sensor specifically required for the Ca(2+)-dependent exocytosis of secretory vesicles containing IGF1 in neurons of the olfactory bulb. Exocytosis of IGF1 is required for sensory perception of smell. Not involved in Ca(2+)-dependent synaptic vesicle exocytosis. Acts through Ca(2+) and phospholipid binding to the C2 domain: Ca(2+) induces binding of the C2-domains to phospholipid membranes and to assembled SNARE-complexes; both actions contribute to triggering exocytosis. The sequence is that of Synaptotagmin-10 (Syt10) from Rattus norvegicus (Rat).